A 150-amino-acid polypeptide reads, in one-letter code: Probable FKBP-type 16 kDa peptidyl-prolyl cis-trans isomerase (150 aa).

Residues 14-88 (NTEVTLHFAL…PNPQNVQIIP (75 aa)) form the PPIase FKBP-type domain.

This sequence belongs to the FKBP-type PPIase family.

The enzyme catalyses [protein]-peptidylproline (omega=180) = [protein]-peptidylproline (omega=0). Functionally, PPIases accelerate the folding of proteins. This chain is Probable FKBP-type 16 kDa peptidyl-prolyl cis-trans isomerase (yaaD), found in Pseudomonas fluorescens.